A 278-amino-acid polypeptide reads, in one-letter code: NH(3)-dependent NAD(+) synthetase (278 aa).

43 to 50 contributes to the ATP binding site; that stretch reads GISGGVDS. Mg(2+) is bound at residue Asp49. Residue Arg146 participates in deamido-NAD(+) binding. Thr166 serves as a coordination point for ATP. Glu171 contacts Mg(2+). Lys179 and Asp186 together coordinate deamido-NAD(+). Residues Lys195 and Thr217 each contribute to the ATP site. Position 266 to 267 (266 to 267) interacts with deamido-NAD(+); it reads HK.

The protein belongs to the NAD synthetase family. As to quaternary structure, homodimer.

It carries out the reaction deamido-NAD(+) + NH4(+) + ATP = AMP + diphosphate + NAD(+) + H(+). The protein operates within cofactor biosynthesis; NAD(+) biosynthesis; NAD(+) from deamido-NAD(+) (ammonia route): step 1/1. Functionally, catalyzes the ATP-dependent amidation of deamido-NAD to form NAD. Uses ammonia as a nitrogen source. The sequence is that of NH(3)-dependent NAD(+) synthetase from Pseudoalteromonas translucida (strain TAC 125).